The sequence spans 153 residues: MKTFVLHIFIFALVAFASASRDSAKKIGSQYDNYETCLTEHGLTDDDIFSIGEVSSGQHKTNHEDTELHKNGCVMQCMLEKDGLMSGADYDEEKMREDYIKETGAQPGDQRIEALNACMQETKDMEDKCDKSLILVACVLAAEVVLADSSEGA.

The signal sequence occupies residues 1-19 (MKTFVLHIFIFALVAFASA). 3 disulfides stabilise this stretch: cysteine 37–cysteine 77, cysteine 73–cysteine 129, and cysteine 118–cysteine 138.

This sequence belongs to the PBP/GOBP family. Homodimer.

It is found in the secreted. Colony queen number, a major feature of social organization, is associated with worker genotype for Gp-9. Colonies are headed by either a single reproductive queen (monogyne form) or multiple queens (polygyne form). Differences in worker Gp-9 genotypes between social forms may cause differences in workers' abilities to recognize queens and regulate their numbers. The chain is Pheromone-binding protein Gp-9 from Solenopsis substituta (Fire ant).